We begin with the raw amino-acid sequence, 518 residues long: MFS-type transporter cnsO (518 aa).

Residues 1–13 (MESTDSSPPLSMT) are compositionally biased toward polar residues. Residues 1-24 (MESTDSSPPLSMTDTEKKGDAVTT) form a disordered region. 9 helical membrane passes run 99–119 (LALM…NIML), 122–142 (VGPK…TTLT), 156–176 (LMLG…LSMW), 187–207 (AIFY…AYGV), 221–241 (WLFL…LFCL), 298–318 (FMMM…SYTL), 334–354 (VMTT…GYIS), 362–382 (LCIM…WITV), and 392–412 (YFAI…VGAW). N-linked (GlcNAc...) asparagine glycosylation is present at Asn416. Transmembrane regions (helical) follow at residues 427-447 (IGLL…NIYI) and 455-475 (PLGF…PATI).

It belongs to the major facilitator superfamily.

The protein localises to the cell membrane. MFS-type transporter; part of the gene cluster that mediates the biosynthesis of communesins, a prominent class of indole alkaloids with great potential as pharmaceuticals. With the MFS transporter cnsL, is most likely responsible for cummunesins secretion and thereby may contribute to intrinsic resistance. This Penicillium expansum (Blue mold rot fungus) protein is MFS-type transporter cnsO.